A 143-amino-acid chain; its full sequence is ATP synthase subunit 9, mitochondrial (143 aa).

The transit peptide at 1–62 directs the protein to the mitochondrion; sequence MAASRVFAQR…ARQAFAARRQ (62 aa). 2 consecutive transmembrane segments (helical) span residues 85 to 105 and 119 to 139; these read IGLGGAGIGIGVVFGSLLLAV and AILGFAFVEAIGLFDLMVAMM.

This sequence belongs to the ATPase C chain family. F-type ATPases have 2 components, CF(1) - the catalytic core - and CF(0) - the membrane proton channel. CF(1) has five subunits: alpha(3), beta(3), gamma(1), delta(1), epsilon(1). CF(0) has three main subunits: a, b and c.

The protein resides in the mitochondrion membrane. In terms of biological role, mitochondrial membrane ATP synthase (F(1)F(0) ATP synthase or Complex V) produces ATP from ADP in the presence of a proton gradient across the membrane which is generated by electron transport complexes of the respiratory chain. F-type ATPases consist of two structural domains, F(1) - containing the extramembraneous catalytic core and F(0) - containing the membrane proton channel, linked together by a central stalk and a peripheral stalk. During catalysis, ATP synthesis in the catalytic domain of F(1) is coupled via a rotary mechanism of the central stalk subunits to proton translocation. Part of the complex F(0) domain. A homomeric c-ring of probably 10 subunits is part of the complex rotary element. In Emericella nidulans (strain FGSC A4 / ATCC 38163 / CBS 112.46 / NRRL 194 / M139) (Aspergillus nidulans), this protein is ATP synthase subunit 9, mitochondrial (atp9).